The primary structure comprises 153 residues: Prostaglandin E synthase (153 aa).

Over 1 to 13 (MTSLGLVMENSQV) the chain is Lumenal. The helical transmembrane segment at 14–42 (LPAFLLCSTLLVIKMYAVAVITGQVRLRK) threads the bilayer. Arg39 contributes to the glutathione binding site. The Cytoplasmic portion of the chain corresponds to 43–61 (KAFANPEDALKRGGLQYCR). The chain crosses the membrane as a helical span at residues 62–91 (SDPDVERCLRAHRNDMETIYPFLFLGFVYS). 74–78 (RNDME) is a binding site for glutathione. The Lumenal portion of the chain corresponds to 92-98 (FLGPNPL). The chain crosses the membrane as a helical span at residues 99-120 (IAWIHFLVVLTGRVVHTVAYLG). 2 residues coordinate glutathione: His114 and Tyr118. At 121–124 (KMNP) the chain is on the cytoplasmic side. Residues 125 to 153 (RIRSGAYVLAQFACFSMALQILWEVAHHL) traverse the membrane as a helical segment. Residue 127–131 (RSGAY) participates in glutathione binding.

Belongs to the MAPEG family. Glutathione is required as a cofactor.

The protein resides in the membrane. The protein localises to the cytoplasm. It localises to the perinuclear region. The catalysed reaction is prostaglandin H2 = prostaglandin E2. It catalyses the reaction 2-glyceryl-prostaglandin H2 = 2-glyceryl-prostaglandin E2. It carries out the reaction prostaglandin G2 = (15S)-15-hydroperoxy-prostaglandin E2. The enzyme catalyses 1-chloro-2,4-dinitrobenzene + glutathione = 2,4-dinitrophenyl-S-glutathione + chloride + H(+). The catalysed reaction is (5S)-hydroperoxy-(6E,8Z,11Z,14Z)-eicosatetraenoate + 2 glutathione = (5S)-hydroxy-(6E,8Z,11Z,14Z)-eicosatetraenoate + glutathione disulfide + H2O. It participates in lipid metabolism; prostaglandin biosynthesis. Activity is increased following LPS stimulation and down-regulated by the anti-inflammatory glucocorticoid dexamethasone. Functionally, terminal enzyme of the cyclooxygenase (COX)-2-mediated prostaglandin E2 (PGE2) biosynthetic pathway. Catalyzes the glutathione-dependent oxidoreduction of prostaglandin endoperoxide H2 (PGH2) to prostaglandin E2 (PGE2) in response to inflammatory stimuli. Plays a key role in inflammation response, fever and pain. Also catalyzes the oxidoreduction of endocannabinoids into prostaglandin glycerol esters and PGG2 into 15-hydroperoxy-PGE2. In addition, displays low glutathione transferase and glutathione-dependent peroxidase activities, toward 1-chloro-2,4-dinitrobenzene and 5-hydroperoxyicosatetraenoic acid (5-HPETE), respectively. This Rattus norvegicus (Rat) protein is Prostaglandin E synthase (Ptges).